Here is a 441-residue protein sequence, read N- to C-terminus: Chromosome partition protein MukF (441 aa).

Positions 208 to 236 (LDETSGNLRELQDTLNAAGDKLQAQLLRI) are leucine-zipper.

This sequence belongs to the MukF family. Interacts, and probably forms a ternary complex, with MukE and MukB via its C-terminal region. The complex formation is stimulated by calcium or magnesium. It is required for an interaction between MukE and MukB.

It localises to the cytoplasm. The protein localises to the nucleoid. Functionally, involved in chromosome condensation, segregation and cell cycle progression. May participate in facilitating chromosome segregation by condensation DNA from both sides of a centrally located replisome during cell division. Not required for mini-F plasmid partitioning. Probably acts via its interaction with MukB and MukE. Overexpression results in anucleate cells. It has a calcium binding activity. This Pasteurella multocida (strain Pm70) protein is Chromosome partition protein MukF.